Here is a 119-residue protein sequence, read N- to C-terminus: Small ribosomal subunit protein bS16 (119 aa).

This sequence belongs to the bacterial ribosomal protein bS16 family.

The sequence is that of Small ribosomal subunit protein bS16 from Chlamydia felis (strain Fe/C-56) (Chlamydophila felis).